We begin with the raw amino-acid sequence, 158 residues long: Tryptophan-rich protein TspO (158 aa).

5 helical membrane passes run 5-25 (ILTL…GSTF), 48-68 (LFPP…AKVL), 79-99 (VGVV…ASFF), 105-125 (LAGL…MLAF), and 134-154 (LLLV…FTIL).

This sequence belongs to the TspO/BZRP family.

Its subcellular location is the membrane. It localises to the cell membrane. In terms of biological role, binds tetrapyrroles and promotes the photooxidative degradation of protoporphyrin IX. Can bind the benzodiazepine receptor agonist PK-11195 (in vitro); this interferes with photooxidative tetrapyrrole degradation. May play a role in the transmembrane transport of tetrapyrroles and similar compounds. In Chlorobaculum tepidum (strain ATCC 49652 / DSM 12025 / NBRC 103806 / TLS) (Chlorobium tepidum), this protein is Tryptophan-rich protein TspO.